The primary structure comprises 139 residues: Bilirubin-inducible fluorescent protein UnaG (139 aa).

(4Z,15Z)-bilirubin IXalpha is bound by residues Asn-57, Thr-61, Ser-80, Arg-112, and 132-134; that span reads RSY.

The protein belongs to the calycin superfamily. Fatty-acid binding protein (FABP) family. As to quaternary structure, monomer. As to expression, detected in small-diameter muscle fibers from the white muscle layer from juvenile animals (glass eels) (at protein level). Detected in small-diameter muscle fibers from juvenile animals (glass eels).

It localises to the cytoplasm. Its function is as follows. Beta-barrel protein that binds unconjugated bilirubin with high affinity. Excitation of the bilirubin-bound protein gives rise to green fluorescence, both under normoxia and hypoxia. The apoprotein is not fluorescent. Does not emit fluorescence in the presence of ditauro-bilirubin, urobilin or biliverdin. In Anguilla japonica (Japanese eel), this protein is Bilirubin-inducible fluorescent protein UnaG.